The following is a 262-amino-acid chain: ATP synthase subunit a (262 aa).

Transmembrane regions (helical) follow at residues 30 to 50 (ITSL…LTIF), 64 to 84 (WNIV…DQIG), 91 to 111 (LIYF…NILG), 123 to 143 (ISVT…IGFS), 149 to 169 (FFSL…LVLI), 195 to 215 (LFGV…SILL), and 220 to 240 (IGLP…VALL).

It belongs to the ATPase A chain family. In terms of assembly, F-type ATPases have 2 components, CF(1) - the catalytic core - and CF(0) - the membrane proton channel. CF(1) has five subunits: alpha(3), beta(3), gamma(1), delta(1), epsilon(1). CF(0) has three main subunits: a, b and c.

The protein resides in the mitochondrion inner membrane. In terms of biological role, mitochondrial membrane ATP synthase (F(1)F(0) ATP synthase or Complex V) produces ATP from ADP in the presence of a proton gradient across the membrane which is generated by electron transport complexes of the respiratory chain. F-type ATPases consist of two structural domains, F(1) - containing the extramembraneous catalytic core and F(0) - containing the membrane proton channel, linked together by a central stalk and a peripheral stalk. During catalysis, ATP synthesis in the catalytic domain of F(1) is coupled via a rotary mechanism of the central stalk subunits to proton translocation. Key component of the proton channel; it may play a direct role in the translocation of protons across the membrane. The protein is ATP synthase subunit a (ATP6) of Allomyces arbusculus (Aquatic fungus).